A 161-amino-acid chain; its full sequence is Type IV major fimbrial protein FimA (161 aa).

Positions 1–7 (MKSLQKG) are cleaved as a propeptide — leader sequence. Phe8 carries the post-translational modification N-methylphenylalanine. The chain crosses the membrane as a helical span at residues 8 to 28 (FTLIELMIVVAIIGILAAFAI). A disulfide bridge connects residues Cys63 and Cys105.

It belongs to the N-Me-Phe pilin family. The pili are polar flexible filaments of about 5.4 nanometers diameter and 2.5 micrometers average length; they consist of only a single polypeptide chain arranged in a helical configuration of five subunits per turn in the assembled pilus.

The protein localises to the fimbrium. It is found in the membrane. Functionally, major component of the type IV fimbriae that plays an essential role in twitching motility, natural transformation, and protease secretion. This is Type IV major fimbrial protein FimA (fimA) from Dichelobacter nodosus (Bacteroides nodosus).